Here is a 183-residue protein sequence, read N- to C-terminus: ATP synthase subunit delta (183 aa).

It belongs to the ATPase delta chain family. In terms of assembly, F-type ATPases have 2 components, F(1) - the catalytic core - and F(0) - the membrane proton channel. F(1) has five subunits: alpha(3), beta(3), gamma(1), delta(1), epsilon(1). F(0) has three main subunits: a(1), b(2) and c(10-14). The alpha and beta chains form an alternating ring which encloses part of the gamma chain. F(1) is attached to F(0) by a central stalk formed by the gamma and epsilon chains, while a peripheral stalk is formed by the delta and b chains.

The protein resides in the cell inner membrane. Its function is as follows. F(1)F(0) ATP synthase produces ATP from ADP in the presence of a proton or sodium gradient. F-type ATPases consist of two structural domains, F(1) containing the extramembraneous catalytic core and F(0) containing the membrane proton channel, linked together by a central stalk and a peripheral stalk. During catalysis, ATP synthesis in the catalytic domain of F(1) is coupled via a rotary mechanism of the central stalk subunits to proton translocation. In terms of biological role, this protein is part of the stalk that links CF(0) to CF(1). It either transmits conformational changes from CF(0) to CF(1) or is implicated in proton conduction. The sequence is that of ATP synthase subunit delta from Syntrophobacter fumaroxidans (strain DSM 10017 / MPOB).